Consider the following 750-residue polypeptide: Photosystem I P700 chlorophyll a apoprotein A1 (750 aa).

The next 8 membrane-spanning stretches (helical) occupy residues 70-93, 156-179, 195-219, 291-309, 346-369, 385-411, 433-455, and 531-549; these read VFSAHFGQLSIIFLWLSGMYFHGA, LYCTAIGALVFAALMLFAGWFHYH, LNHHLAGLLGLGSLSWAGHQVHVSL, IAHHHLAIAILFLIAGHMY, WHAQLSLNLAMLGSLTIVVAHHMY, LSLFTHHMWIGGFLIVGAAAHAAIFMV, AIISHLNWVCIFLGFHSFGLYIH, and FLVHHIHAFTIHVTVLILL. [4Fe-4S] cluster is bound by residues Cys-573 and Cys-582. A run of 2 helical transmembrane segments spans residues 589–610 and 664–686; these read HVFLGLFWMYNAISVVIFHFSW and LSAYGLFFLGAHFVWAFSLMFLF. His-675 lines the chlorophyll a' pocket. Residues Met-683 and Tyr-691 each contribute to the chlorophyll a site. Position 692 (Trp-692) interacts with phylloquinone. The chain crosses the membrane as a helical span at residues 724 to 744; that stretch reads TVGVTHYLLGGIATTWAFFLA.

The protein belongs to the PsaA/PsaB family. The PsaA/B heterodimer binds the P700 chlorophyll special pair and subsequent electron acceptors. PSI consists of a core antenna complex that captures photons, and an electron transfer chain that converts photonic excitation into a charge separation. The eukaryotic PSI reaction center is composed of at least 11 subunits. Requires P700 is a chlorophyll a/chlorophyll a' dimer, A0 is one or more chlorophyll a, A1 is one or both phylloquinones and FX is a shared 4Fe-4S iron-sulfur center. as cofactor.

Its subcellular location is the plastid. It localises to the chloroplast thylakoid membrane. The catalysed reaction is reduced [plastocyanin] + hnu + oxidized [2Fe-2S]-[ferredoxin] = oxidized [plastocyanin] + reduced [2Fe-2S]-[ferredoxin]. In terms of biological role, psaA and PsaB bind P700, the primary electron donor of photosystem I (PSI), as well as the electron acceptors A0, A1 and FX. PSI is a plastocyanin-ferredoxin oxidoreductase, converting photonic excitation into a charge separation, which transfers an electron from the donor P700 chlorophyll pair to the spectroscopically characterized acceptors A0, A1, FX, FA and FB in turn. Oxidized P700 is reduced on the lumenal side of the thylakoid membrane by plastocyanin. The polypeptide is Photosystem I P700 chlorophyll a apoprotein A1 (Oenothera elata subsp. hookeri (Hooker's evening primrose)).